Reading from the N-terminus, the 218-residue chain is Probable transaldolase (218 aa).

The active-site Schiff-base intermediate with substrate is the K87.

It belongs to the transaldolase family. Type 3B subfamily.

The protein resides in the cytoplasm. The enzyme catalyses D-sedoheptulose 7-phosphate + D-glyceraldehyde 3-phosphate = D-erythrose 4-phosphate + beta-D-fructose 6-phosphate. The protein operates within carbohydrate degradation; pentose phosphate pathway; D-glyceraldehyde 3-phosphate and beta-D-fructose 6-phosphate from D-ribose 5-phosphate and D-xylulose 5-phosphate (non-oxidative stage): step 2/3. Functionally, transaldolase is important for the balance of metabolites in the pentose-phosphate pathway. This Cytophaga hutchinsonii (strain ATCC 33406 / DSM 1761 / CIP 103989 / NBRC 15051 / NCIMB 9469 / D465) protein is Probable transaldolase.